The chain runs to 370 residues: uncharacterized protein (370 aa).

Helical transmembrane passes span 6–26 (AVVFILAAFLLWGAADYCLGN), 49–69 (IGIVSLAPVLAAILIPIVAPF), 79–99 (SFANTILAIDMGGYALAGEMA), 111–131 (FLGTMMGPAIVFTIPVALGII), 143–163 (ILIGLCTVPIGCLIGGLCAGF), 167–187 (MIGKNLLIPSLLSAVIAFGLW), 206–226 (MVAIIGLAAVSVETMTGIVLI), 236–256 (IQTTGTIAIALAGAFPMTAFI), 307–327 (VAFAVSGAFVLGSHLGFVAGM), and 333–353 (AAMIIGKLAGGVTAAAAAAWM).

This sequence belongs to the EutH family.

The protein localises to the cell membrane. This is an uncharacterized protein from Bacillus subtilis (strain 168).